We begin with the raw amino-acid sequence, 215 residues long: Cytochrome b6 (215 aa).

The helical transmembrane segment at 32–52 (IFYCLGGITLTCFLVQVATGF) threads the bilayer. Residue C35 coordinates heme c. 2 residues coordinate heme b: H86 and H100. Transmembrane regions (helical) follow at residues 90 to 110 (ASMM…TGGF), 116 to 136 (LTWV…VTGY), and 186 to 206 (LHTF…FLMI). Heme b contacts are provided by H187 and H202.

It belongs to the cytochrome b family. PetB subfamily. In terms of assembly, the 4 large subunits of the cytochrome b6-f complex are cytochrome b6, subunit IV (17 kDa polypeptide, PetD), cytochrome f and the Rieske protein, while the 4 small subunits are PetG, PetL, PetM and PetN. The complex functions as a dimer. The cofactor is heme b. It depends on heme c as a cofactor.

The protein resides in the plastid. The protein localises to the chloroplast thylakoid membrane. Component of the cytochrome b6-f complex, which mediates electron transfer between photosystem II (PSII) and photosystem I (PSI), cyclic electron flow around PSI, and state transitions. In Morus indica (Mulberry), this protein is Cytochrome b6.